We begin with the raw amino-acid sequence, 220 residues long: Elongation factor Ts, chloroplastic (220 aa).

This sequence belongs to the EF-Ts family.

Its subcellular location is the plastid. The protein resides in the chloroplast. Functionally, associates with the EF-Tu.GDP complex and induces the exchange of GDP to GTP. It remains bound to the aminoacyl-tRNA.EF-Tu.GTP complex up to the GTP hydrolysis stage on the ribosome. The chain is Elongation factor Ts, chloroplastic (tsf) from Pyropia yezoensis (Susabi-nori).